Here is a 50-residue protein sequence, read N- to C-terminus: DNA replication protein repEA (50 aa).

In terms of biological role, involved in T4 DNA replication. Binds to ssDNA. The polypeptide is DNA replication protein repEA (repEA) (Enterobacteria phage T4 (Bacteriophage T4)).